We begin with the raw amino-acid sequence, 254 residues long: Large ribosomal subunit protein uL2 (254 aa).

The protein belongs to the universal ribosomal protein uL2 family.

The protein is Large ribosomal subunit protein uL2 (RPL2) of Candida glabrata (strain ATCC 2001 / BCRC 20586 / JCM 3761 / NBRC 0622 / NRRL Y-65 / CBS 138) (Yeast).